Here is a 1050-residue protein sequence, read N- to C-terminus: Ankyrin repeat domain-containing protein 27 (1050 aa).

Residues 1 to 372 (MALYDEDLLK…RQGSLSAKPP (372 aa)) form a sufficient for GEF activity towards RAB21 region. In terms of domain architecture, VPS9 spans 233–371 (ASEDAAFNKI…IRQGSLSAKP (139 aa)). ANK repeat units lie at residues 396–426 (SPTD…DKDT), 462–491 (RGHT…MVNA), 495–524 (HGAT…SAEV), 528–560 (NGNT…RLDI), 564–593 (KGDT…STEI), and 597–627 (LKET…RQKS). Positions 396 to 460 (SPTDCLFKHI…PSVVTPFSRD (65 aa)) are sufficient for interaction with VPS29. Positions 451-600 (PSVVTPFSRD…TEIQNRLKET (150 aa)) are interaction with RAB38. Residues 451 to 730 (PSVVTPFSRD…APAQKRLAKV (280 aa)) are interaction with RAB32. The disordered stretch occupies residues 625–665 (QKSSEAPVQSPQRSVDSISQESSTSSFSSMSASSRQEETKK). Polar residues predominate over residues 628-637 (SEAPVQSPQR). Residues 638-658 (SVDSISQESSTSSFSSMSASS) are compositionally biased toward low complexity. Residues 658–707 (SRQEETKKDYREVEKLLRAVADGDLEMVRYLLEWTEEDLEDAEDTVSAAD) form a required for interaction with VAMP7 region. 5 ANK repeats span residues 668-698 (REVE…DLED), 743-772 (DGSS…NAGA), 776-805 (DQAV…KPNK), 809-838 (SGNT…SINA), and 842-871 (KGNT…SVQV). A sufficient for interaction with VPS29 region spans residues 692-746 (TEEDLEDAEDTVSAADPEFCHPLCQCPKCAPAQKRLAKVPASGLGVNVTSQDGSS). Ser962 and Ser970 each carry phosphoserine. Residues 987–1050 (PAQSGSHAAE…TPQEVSASRS (64 aa)) are disordered. The segment covering 994-1004 (AAEKGNSDWPE) has biased composition (basic and acidic residues). Thr1023 is subject to Phosphothreonine. The segment covering 1040–1050 (STPQEVSASRS) has biased composition (polar residues).

As to quaternary structure, interacts with RAB21 (GDP-bound form), VPS29, RAB32 (GTP-bound form), RAB38 (GTP-bound form), VAMP7, KIF5A, KIF5C, GOLGA4. Interacts with low affinity with RAB5. ANKRD27:RAB32 heterodimers can homodimerize to form tetramers. Can interact with RAB38 or RAB32, VPS29 and VAMP7 simultaneously. A decreased interaction with RAB32 seen in the presence of SGSM2.

The protein resides in the early endosome. The protein localises to the late endosome. It is found in the cytoplasmic vesicle membrane. It localises to the lysosome. Its subcellular location is the cell membrane. The protein resides in the melanosome. Functionally, may be a guanine exchange factor (GEF) for Rab21, Rab32 and Rab38 and regulate endosome dynamics. May regulate the participation of VAMP7 in membrane fusion events; in vitro inhibits VAMP7-mediated SNARE complex formation by trapping VAMP7 in a closed, fusogenically inactive conformation. Involved in peripheral melanosomal distribution of TYRP1 in melanocytes; the function, which probably is implicating vesicle-trafficking, includes cooperation with Rab32, Rab38 and VAMP7. Involved in the regulation of neurite growth; the function seems to require its GEF activity, probably towards Rab21, and VAMP7 but not Rab32/38. Proposed to be involved in Golgi sorting of VAMP7 and transport of VAMP7 vesicles to the cell surface; the function seems to implicate kinesin heavy chain isoform 5 proteins, GOLGA4, RAB21 and MACF1. Required for the colocalization of VAMP7 and Rab21, probably on TGN sites. Involved in GLUT1 endosome-to-plasma membrane trafficking; the function is dependent of association with VPS29. Regulates the proper trafficking of melanogenic enzymes TYR, TYRP1 and DCT/TYRP2 to melanosomes in melanocytes. The sequence is that of Ankyrin repeat domain-containing protein 27 (ANKRD27) from Homo sapiens (Human).